Consider the following 514-residue polypeptide: Retron Vc95 probable ATPase (514 aa).

Positions 92–99 match the ATP-binding motif; the sequence is GNNGSGKS.

Probable ATPase component of antiviral defense system retron Vc95, composed of a non-coding RNA (ncRNA), a reverse transcriptase (RT), this protein and a putative HNH endonuclease. Expression of retron Vc95 confers protection against bacteriophages T2, T4 and T6. At multiplicity of infection (MOI) of 0.02 cultures slow growth when infected with T4 but do not collapse, at MOI 2 cultures enter growth stasis. In Vibrio cholerae serotype O1 biovar El Tor, this protein is Retron Vc95 probable ATPase.